We begin with the raw amino-acid sequence, 291 residues long: MSWLSKLMPSGIRTDNTPSKKRSVPEGLWEKCSNCGSALYRPELEENLEVCPKCGHHMAIRARARLAALFDADSTTEIGARLGPTDLLKFKDQKKYSERIKIAQKNTGEYDALIAMRGLLKGRALVASSFDFAFMGGSMGSVVGERFALAAETAVEIGAPYVCFSQSGGARMQEGLFSLMQMAKTSAALGKLRETGLPYISVLTHPTTGGVSASFAMLGDINIAEPQALIGFAGPRVIEQTVREKLPEGFQRSEFLLEHGAIDQICDRREMRDRLSDLLAMLGRQPAPEVA.

A disordered region spans residues 1 to 23 (MSWLSKLMPSGIRTDNTPSKKRS). Residues 28 to 291 (LWEKCSNCGS…LGRQPAPEVA (264 aa)) enclose the CoA carboxyltransferase N-terminal domain. Zn(2+) contacts are provided by cysteine 32, cysteine 35, cysteine 51, and cysteine 54. The C4-type zinc finger occupies 32–54 (CSNCGSALYRPELEENLEVCPKC).

It belongs to the AccD/PCCB family. In terms of assembly, acetyl-CoA carboxylase is a heterohexamer composed of biotin carboxyl carrier protein (AccB), biotin carboxylase (AccC) and two subunits each of ACCase subunit alpha (AccA) and ACCase subunit beta (AccD). It depends on Zn(2+) as a cofactor.

It is found in the cytoplasm. It catalyses the reaction N(6)-carboxybiotinyl-L-lysyl-[protein] + acetyl-CoA = N(6)-biotinyl-L-lysyl-[protein] + malonyl-CoA. Its pathway is lipid metabolism; malonyl-CoA biosynthesis; malonyl-CoA from acetyl-CoA: step 1/1. Component of the acetyl coenzyme A carboxylase (ACC) complex. Biotin carboxylase (BC) catalyzes the carboxylation of biotin on its carrier protein (BCCP) and then the CO(2) group is transferred by the transcarboxylase to acetyl-CoA to form malonyl-CoA. This is Acetyl-coenzyme A carboxylase carboxyl transferase subunit beta from Stenotrophomonas maltophilia (strain K279a).